We begin with the raw amino-acid sequence, 462 residues long: Receptor like protein 29 (462 aa).

Residues 1-26 (MTMKRALPSPSSLLFFFLLITPLFLC) form the signal peptide. Residues 27 to 441 (QENRVSASMP…SQASRYYRSC (415 aa)) lie on the Extracellular side of the membrane. An N-linked (GlcNAc...) asparagine glycan is attached at Asn139. 10 LRR repeats span residues 139–164 (NSSLQQLSLRSNPSLSGQIPPRISSL), 165–188 (KSLQILTLSQNRLTGDIPPAIFSL), 190–212 (SLVHLDLSYNKLTGKIPLQLGNL), 213–236 (NNLVGLDLSYNSLTGTIPPTISQL), 238–260 (MLQKLDLSSNSLFGRIPEGVEKL), 261–284 (RSLSFMALSNNKLKGAFPKGISNL), 286–308 (SLQYFIMDNNPMFVALPVELGFL), 309–331 (PKLQELQLENSGYSGVIPESYTK), 332–355 (LTNLSSLSLANNRLTGEIPSGFES), and 357–381 (PHVFHLNLSRNLLIGVVPFDSSFLR). Residues Asn334, Asn363, and Asn416 are each glycosylated (N-linked (GlcNAc...) asparagine). A helical transmembrane segment spans residues 442–462 (FFANALFPFALFLGLHQRWVL).

Belongs to the RLP family.

It localises to the cell membrane. This Arabidopsis thaliana (Mouse-ear cress) protein is Receptor like protein 29.